A 96-amino-acid chain; its full sequence is Large ribosomal subunit protein uL23 (96 aa).

It belongs to the universal ribosomal protein uL23 family. Part of the 50S ribosomal subunit. Contacts protein L29, and trigger factor when it is bound to the ribosome.

Functionally, one of the early assembly proteins it binds 23S rRNA. One of the proteins that surrounds the polypeptide exit tunnel on the outside of the ribosome. Forms the main docking site for trigger factor binding to the ribosome. The chain is Large ribosomal subunit protein uL23 from Bacillus mycoides (strain KBAB4) (Bacillus weihenstephanensis).